Reading from the N-terminus, the 33-residue chain is NAD-reducing hydrogenase HoxS subunit gamma (33 aa).

Positions serine 1–leucine 33 constitute a 2Fe-2S ferredoxin-type domain.

The protein belongs to the complex I 75 kDa subunit family. In terms of assembly, tetramer of an alpha and a gamma subunits (flavin-containing dimer), and a delta and a nickel-containing beta subunits (hydrogenase dimer). It depends on [4Fe-4S] cluster as a cofactor.

It is found in the cytoplasm. The enzyme catalyses H2 + NAD(+) = NADH + H(+). In terms of biological role, subunits alpha and gamma of HoxS constitute an NADH--oxidoreductase. The chain is NAD-reducing hydrogenase HoxS subunit gamma (hoxU) from Rhodococcus opacus (Nocardia opaca).